We begin with the raw amino-acid sequence, 512 residues long: Choline-sulfatase (512 aa).

Ca(2+)-binding residues include aspartate 14, glutamine 15, and cysteine 54. Cysteine 54 serves as the catalytic Nucleophile. At cysteine 54 the chain carries 3-oxoalanine (Cys). Histidine 104 is an active-site residue. Residues aspartate 296 and histidine 297 each contribute to the Ca(2+) site.

This sequence belongs to the sulfatase family. Ca(2+) is required as a cofactor. The conversion to 3-oxoalanine (also known as C-formylglycine, FGly), of a serine or cysteine residue in prokaryotes and of a cysteine residue in eukaryotes, is critical for catalytic activity.

The catalysed reaction is choline sulfate + H2O = choline + sulfate + H(+). Its pathway is amine and polyamine biosynthesis; choline biosynthesis; choline from choline sulfate: step 1/1. Converts choline-O-sulfate into choline. This Rhizobium meliloti (strain 1021) (Ensifer meliloti) protein is Choline-sulfatase (betC).